The following is a 162-amino-acid chain: N5-carboxyaminoimidazole ribonucleotide mutase (162 aa).

Ser11, Asp14, and Arg41 together coordinate substrate.

It belongs to the AIR carboxylase family. Class I subfamily.

It carries out the reaction 5-carboxyamino-1-(5-phospho-D-ribosyl)imidazole + H(+) = 5-amino-1-(5-phospho-D-ribosyl)imidazole-4-carboxylate. It participates in purine metabolism; IMP biosynthesis via de novo pathway; 5-amino-1-(5-phospho-D-ribosyl)imidazole-4-carboxylate from 5-amino-1-(5-phospho-D-ribosyl)imidazole (N5-CAIR route): step 2/2. In terms of biological role, catalyzes the conversion of N5-carboxyaminoimidazole ribonucleotide (N5-CAIR) to 4-carboxy-5-aminoimidazole ribonucleotide (CAIR). The chain is N5-carboxyaminoimidazole ribonucleotide mutase from Brucella melitensis biotype 1 (strain ATCC 23456 / CCUG 17765 / NCTC 10094 / 16M).